Here is a 357-residue protein sequence, read N- to C-terminus: CD4+ T-cell-stimulating antigen (357 aa).

The signal sequence occupies residues 1–22; the sequence is MKKRTFALALSMIIASGVILGA. A lipid anchor (N-palmitoyl cysteine) is attached at Cys23. Cys23 is lipidated: S-diacylglycerol cysteine.

It belongs to the BMP lipoprotein family.

The protein localises to the cell membrane. This Listeria monocytogenes serovar 1/2a (strain ATCC BAA-679 / EGD-e) protein is CD4+ T-cell-stimulating antigen (tcsA).